We begin with the raw amino-acid sequence, 579 residues long: 2-isopropylmalate synthase (579 aa).

The 276-residue stretch at 33 to 308 (PRWLSTDLRD…DPGIDFSDIN (276 aa)) folds into the Pyruvate carboxyltransferase domain. Mg(2+) contacts are provided by Asp42, His247, His249, and Asn283. The regulatory domain stretch occupies residues 450-579 (SSDLPVPLAS…IVAPLVAAGR (130 aa)).

It belongs to the alpha-IPM synthase/homocitrate synthase family. LeuA type 2 subfamily. As to quaternary structure, homodimer. It depends on Mg(2+) as a cofactor.

Its subcellular location is the cytoplasm. It catalyses the reaction 3-methyl-2-oxobutanoate + acetyl-CoA + H2O = (2S)-2-isopropylmalate + CoA + H(+). It participates in amino-acid biosynthesis; L-leucine biosynthesis; L-leucine from 3-methyl-2-oxobutanoate: step 1/4. Catalyzes the condensation of the acetyl group of acetyl-CoA with 3-methyl-2-oxobutanoate (2-ketoisovalerate) to form 3-carboxy-3-hydroxy-4-methylpentanoate (2-isopropylmalate). This chain is 2-isopropylmalate synthase, found in Streptosporangium roseum (strain ATCC 12428 / DSM 43021 / JCM 3005 / KCTC 9067 / NCIMB 10171 / NRRL 2505 / NI 9100).